Consider the following 338-residue polypeptide: Malate dehydrogenase, mitochondrial (338 aa).

Residues Met1–Asn24 constitute a mitochondrion transit peptide. NAD(+)-binding positions include Gly31–Gly37 and Asp57. A glycan (O-linked (GlcNAc) serine) is linked at Ser33. N6-acetyllysine; alternate occurs at positions 78 and 91. N6-succinyllysine; alternate occurs at positions 78 and 91. Residues Arg104 and Arg110 each contribute to the substrate site. Residues Asn117 and Ile140–Asn142 contribute to the NAD(+) site. A substrate-binding site is contributed by Asn142. Lys165 is subject to N6-acetyllysine. Arg176 lines the substrate pocket. Lys185 is subject to N6-acetyllysine; alternate. Lys185 bears the N6-succinyllysine; alternate mark. The active-site Proton acceptor is His200. N6-succinyllysine is present on Lys203. An N6-acetyllysine; alternate mark is found at Lys215 and Lys239. N6-succinyllysine; alternate occurs at positions 215 and 239. Lys239 carries the N6-malonyllysine; alternate modification. Residue Ser246 is modified to Phosphoserine. Met251 contributes to the NAD(+) binding site. Lys269 carries the N6-succinyllysine modification. Residues Lys296, Lys301, Lys314, and Lys324 each carry the N6-acetyllysine; alternate modification. N6-succinyllysine; alternate is present on residues Lys296, Lys301, Lys314, and Lys324. Phosphoserine is present on Ser326. N6-acetyllysine; alternate occurs at positions 328, 329, and 335. An N6-succinyllysine; alternate modification is found at Lys328. The residue at position 329 (Lys329) is an N6-malonyllysine; alternate. Lys335 carries the N6-succinyllysine; alternate modification.

It belongs to the LDH/MDH superfamily. MDH type 1 family. As to quaternary structure, homodimer. In terms of processing, acetylation is enhanced after treatment either with trichostin A (TCA) or with nicotinamide (NAM) with the appearance of tri- and tetraacetylations. Glucose also increases acetylation.

The protein resides in the mitochondrion matrix. It catalyses the reaction (S)-malate + NAD(+) = oxaloacetate + NADH + H(+). Its activity is regulated as follows. Enzyme activity is enhanced by acetylation. This Macaca fascicularis (Crab-eating macaque) protein is Malate dehydrogenase, mitochondrial (MDH2).